A 178-amino-acid polypeptide reads, in one-letter code: Large ribosomal subunit protein uL6 (178 aa).

Belongs to the universal ribosomal protein uL6 family. In terms of assembly, part of the 50S ribosomal subunit.

In terms of biological role, this protein binds to the 23S rRNA, and is important in its secondary structure. It is located near the subunit interface in the base of the L7/L12 stalk, and near the tRNA binding site of the peptidyltransferase center. This chain is Large ribosomal subunit protein uL6, found in Streptococcus mutans serotype c (strain ATCC 700610 / UA159).